Here is a 596-residue protein sequence, read N- to C-terminus: Protein kinase C iota type (596 aa).

The span at 1–12 shows a compositional bias: polar residues; that stretch reads MPTQRDSSTMSH. A disordered region spans residues 1–21; the sequence is MPTQRDSSTMSHTVACGGGGD. Proline 2 is modified (N-acetylproline). The interval 2 to 28 is required for interaction with RAB2; it reads PTQRDSSTMSHTVACGGGGDHSHQVRV. The segment at 2 to 253 is regulatory domain; sequence PTQRDSSTMS…KASSSLGLQD (252 aa). Threonine 3 is modified (phosphothreonine). Phosphoserine occurs at positions 7 and 8. Threonine 9 is subject to Phosphothreonine. The region spanning 25–108 is the PB1 domain; it reads QVRVKAYYRG…SELLIHVFPC (84 aa). The interval 72 to 91 is interaction with PARD6A; the sequence is DEEGDPCTVSSQLELEEAFR. Positions 125-134 match the Pseudosubstrate motif; the sequence is YRRGARRWRK. Residues 140-190 form a Phorbol-ester/DAG-type zinc finger; it reads GHTFQAKRFNRRAHCAICTDRIWGLGRQGYKCINCKLLVHKKCHKLVTIEC. The Protein kinase domain occupies 254–522; sequence FDLLRVIGRG…FADIQGHPFF (269 aa). An ATP-binding site is contributed by 260-268; sequence IGRGSYAKV. Phosphotyrosine; by SRC occurs at positions 265 and 280. Lysine 283 contributes to the ATP binding site. A Phosphotyrosine; by SRC modification is found at tyrosine 334. Aspartate 378 acts as the Proton acceptor in catalysis. Phosphothreonine; by PDPK1 is present on threonine 412. One can recognise an AGC-kinase C-terminal domain in the interval 523 to 594; it reads RNVDWDMMEQ…INPLLMSAEE (72 aa). Threonine 564 carries the phosphothreonine modification.

It belongs to the protein kinase superfamily. AGC Ser/Thr protein kinase family. PKC subfamily. Forms a complex with SQSTM1 and MP2K5. Interacts directly with SQSTM1. Interacts with IKBKB. Interacts with PARD6A, PARD6B and PARD6G. Part of a quaternary complex containing aPKC, PARD3, a PARD6 protein (PARD6A, PARD6B or PARD6G) and a GTPase protein (CDC42 or RAC1). Part of a complex with LLGL1 and PARD6B. Interacts with ADAP1/CENTA1. Interaction with SMG1, through the ZN-finger domain, activates the kinase activity. Interacts with CDK7. Forms a complex with RAB2A and GAPDH involved in recruitment onto the membrane of vesicular tubular clusters (VTCs). Interacts with ECT2 ('Thr-359' phosphorylated form). Interacts with VAMP2. Interacts with WDFY2 (via WD repeats 1-3). Post-translationally, phosphorylation at Thr-412 in the activation loop is not mandatory for activation. Upon neuronal growth factor (NGF) stimulation, phosphorylated by SRC at Tyr-265, Tyr-280 and Tyr-334. Phosphorylation at Tyr-265 facilitates binding to KPNB1/importin-beta regulating entry of PRKCI into the nucleus. Phosphorylation on Tyr-334 is important for NF-kappa-B stimulation. Phosphorylated at Thr-564 during the initial phase of long term potentiation. As to expression, expressed in dorsal hippocampus (at protein level).

The protein localises to the cytoplasm. It localises to the membrane. Its subcellular location is the endosome. The protein resides in the nucleus. It catalyses the reaction L-seryl-[protein] + ATP = O-phospho-L-seryl-[protein] + ADP + H(+). It carries out the reaction L-threonyl-[protein] + ATP = O-phospho-L-threonyl-[protein] + ADP + H(+). With respect to regulation, atypical PKCs (PRKCI and PRKCZ) exhibit an elevated basal enzymatic activity (that may be due to the interaction with SMG1 or SQSTM1) and are not regulated by diacylglycerol, phosphatidylserine, phorbol esters or calcium ions. Two specific sites, Thr-412 (activation loop of the kinase domain) and Thr-564 (turn motif), need to be phosphorylated for its full activation. Might also be a target for novel lipid activators that are elevated during nutrient-stimulated insulin secretion. Its function is as follows. Calcium- and diacylglycerol-independent serine/ threonine-protein kinase that plays a general protective role against apoptotic stimuli, is involved in NF-kappa-B activation, cell survival, differentiation and polarity, and contributes to the regulation of microtubule dynamics in the early secretory pathway. Is necessary for BCR-ABL oncogene-mediated resistance to apoptotic drug in leukemia cells, protecting leukemia cells against drug-induced apoptosis. In cultured neurons, prevents amyloid beta protein-induced apoptosis by interrupting cell death process at a very early step. In glioblastoma cells, may function downstream of phosphatidylinositol 3-kinase (PI3K) and PDPK1 in the promotion of cell survival by phosphorylating and inhibiting the pro-apoptotic factor BAD. Can form a protein complex in non-small cell lung cancer (NSCLC) cells with PARD6A and ECT2 and regulate ECT2 oncogenic activity by phosphorylation, which in turn promotes transformed growth and invasion. In response to nerve growth factor (NGF), acts downstream of SRC to phosphorylate and activate IRAK1, allowing the subsequent activation of NF-kappa-B and neuronal cell survival. Functions in the organization of the apical domain in epithelial cells by phosphorylating EZR. This step is crucial for activation and normal distribution of EZR at the early stages of intestinal epithelial cell differentiation. Forms a protein complex with LLGL1 and PARD6B independently of PARD3 to regulate epithelial cell polarity. Plays a role in microtubule dynamics in the early secretory pathway through interaction with RAB2A and GAPDH and recruitment to vesicular tubular clusters (VTCs). In human coronary artery endothelial cells (HCAEC), is activated by saturated fatty acids and mediates lipid-induced apoptosis. Downstream of PI3K is required for insulin-stimulated glucose transport. Activates RAB4A and promotes its association with KIF3A which is required for the insulin-induced SLC2A4/GLUT4 translocation in adipocytes. Is essential in early embryogenesis and development of differentiating photoreceptors by playing a role in the establishment of epithelial and neuronal polarity. Involved in early synaptic long term potentiation phase in CA1 hippocampal cells and short term memory formation. In Rattus norvegicus (Rat), this protein is Protein kinase C iota type (Prkci).